Consider the following 433-residue polypeptide: Zinc finger and SCAN domain-containing protein 4 (433 aa).

The 83-residue stretch at 44–126 (RMVLNSFQDS…RFIEDLTDDS (83 aa)) folds into the SCAN box domain. 3 stretches are compositionally biased toward polar residues: residues 165-185 (TTREANMGTPSQTSQDTSLET), 195-210 (GWNSSSKTTRVNENIT), and 277-299 (QPEQSSPESALTHQSNEGNSTCE). 2 disordered regions span residues 165–210 (TTRE…ENIT) and 275–301 (ISQPEQSSPESALTHQSNEGNSTCEVH). C2H2-type zinc fingers lie at residues 312–334 (YKCEECPKVFKYLCHLLAHQRRH), 340–362 (FVCPECQKGFFQISDLRVHQIIH), 368–390 (FTCSMCKKSFSHKTNLRSHERIH), and 396–418 (YTCPFCKTSYRQSSTYHRHMRTH).

Its subcellular location is the nucleus. It localises to the chromosome. The protein resides in the telomere. Functionally, embryonic stem (ES) cell-specific transcription factor required to regulate ES cell pluripotency. Binds telomeres and plays a key role in genomic stability in ES cells by regulating telomere elongation. Acts as an activator of spontaneous telomere sister chromatid exchange (T-SCE) and telomere elongation in undifferentiated ES cells. This is Zinc finger and SCAN domain-containing protein 4 (ZSCAN4) from Homo sapiens (Human).